We begin with the raw amino-acid sequence, 544 residues long: Esterase-6 (544 aa).

Positions 1-21 (MNYVGLGLIIVLSCLWLGSNA) are cleaved as a signal peptide. Residue Asn42 is glycosylated (N-linked (GlcNAc...) asparagine). A disulfide bridge connects residues Cys86 and Cys105. Ser209 (acyl-ester intermediate) is an active-site residue. A disulfide bridge connects residues Cys261 and Cys273. N-linked (GlcNAc...) asparagine glycosylation is found at Asn420 and Asn456. The active-site Charge relay system is the His466. Residue Asn506 is glycosylated (N-linked (GlcNAc...) asparagine). Cys514 and Cys535 form a disulfide bridge.

This sequence belongs to the type-B carboxylesterase/lipase family. Monomer. As to expression, specifically expressed in the ejaculatory bulbs of male.

It localises to the secreted. It catalyses the reaction a carboxylic ester + H2O = an alcohol + a carboxylate + H(+). Its function is as follows. Transferred from the ejaculatory bulbs of males to the female genitals upon copulation, plays an important role in the reproductive biology. The polypeptide is Esterase-6 (Est-6) (Drosophila melanogaster (Fruit fly)).